The chain runs to 579 residues: MSRFMHFYKSPVPLVLQAHKKNCLVYTNLRTRRLRLLAQLNQREKELKNQDFRVGHEKVINTIDEIRTFLVDNHDDIIESIDGVIRTLRDIRPNEQVSSSTTTGHNNTTGTPTQSVVSGTGAVTGTGGTSSVAPDANMVADKTVTITMADKPFEYRDSFRDEFIATMYNATLRSYTMGDWYSKLKQKIYDEERYRRRFKVTHPESPAISYELVCGQVQILDLVTVYPTTDIVITDIQSAICILWTLYNGILNTTLDLSVTFEEVFEKVPGMLDVLEAEIKKENGNTTLFGTYSFADNEDIVFYNPPKDKRYSPRTFENNVIVRLLYRLRCIQNMPNDPLGAAAQSNLGIGWDEDRLFRVCRKLLTGIVQDVPIFLHKQYYLRSGCTCISALLYVKCFLDSTSVFSPSDRKFSLDTFLPNANTYVDASDYRGRNIKNFSFLWKKYVTQLYKDRPSITFSGIFPGAVLFSIAYSVSNNWLGPGHVQRPHPNARTVKLQLLHNQPLYSYLWVQHRVPRHPLEVLKAHDRALFYFEYGIHLLLNQPISFTTHRNTLKRQFNVTDVYELCYFFVLGFVPVELII.

The tract at residues 1 to 46 is interaction with major capsid protein/MCP; it reads MSRFMHFYKSPVPLVLQAHKKNCLVYTNLRTRRLRLLAQLNQREKE. The disordered stretch occupies residues 92–134; the sequence is RPNEQVSSSTTTGHNNTTGTPTQSVVSGTGAVTGTGGTSSVAP. The segment covering 101–121 has biased composition (low complexity); the sequence is TTTGHNNTTGTPTQSVVSGTG.

The protein belongs to the herpesviridae CVC2 protein family. As to quaternary structure, heterodimerizes with CVC1. Interacts with major capsid protein/MCP and triplex capsid protein 1/TRX1 at the pentamer vertices. Interacts with the large tegument protein/LTP.

The protein localises to the virion. Its subcellular location is the host nucleus. Functionally, capsid vertex-specific component that plays a role during viral DNA encapsidation, assuring correct genome cleavage and presumably stabilizing capsids that contain full-length viral genomes. Participates in the interaction between the capsid and the tegument through interaction with the large tegument protein/LTP. The protein is Capsid vertex component 2 of Elephantid herpesvirus 1 (isolate Asian elephant/Berlin/Kiba/1998) (EIHV-1).